Reading from the N-terminus, the 275-residue chain is Mitochondrial fission factor homolog A (275 aa).

The Cytoplasmic portion of the chain corresponds to 1 to 255 (MAEVNRIHYE…ENKERAKREM (255 aa)). The interval 100–171 (DFLEPEPAAN…PLISPEDSQN (72 aa)) is disordered. Over residues 114-130 (PREEMKSHFRSRREQCR) the composition is skewed to basic and acidic residues. The segment covering 131 to 142 (SENSTMRRNGQI) has biased composition (polar residues). The stretch at 223 to 253 (LTDAASLRRQIIKLNRRLQLLEHENKERAKR) forms a coiled coil. The helical; Anchor for type IV membrane protein transmembrane segment at 256–273 (VMYSLTVAFWLVNSWIWL) threads the bilayer. The Extracellular portion of the chain corresponds to 274-275 (RR).

This sequence belongs to the Tango11 family.

The protein localises to the mitochondrion outer membrane. The protein resides in the peroxisome. In terms of biological role, plays a role in mitochondrial and peroxisomal fission. Promotes the recruitment and association of the fission mediator dynamin-related protein 1 (DNM1L) to the mitochondrial surface. This Danio rerio (Zebrafish) protein is Mitochondrial fission factor homolog A.